Reading from the N-terminus, the 258-residue chain is Uridylate cyclase (258 aa).

One can recognise a Guanylate cyclase domain in the interval alanine 50 to cysteine 190. An a ribonucleoside 5'-triphosphate-binding site is contributed by phenylalanine 53. Residues aspartate 55 and aspartate 102 each coordinate Mn(2+).

This sequence belongs to the adenylyl cyclase class-4/guanylyl cyclase family. Pyrimidine cyclase subfamily. Homodimer. Mn(2+) is required as a cofactor.

Its subcellular location is the cytoplasm. It carries out the reaction UTP = 3',5'-cyclic UMP + diphosphate. Its function is as follows. Pycsar (pyrimidine cyclase system for antiphage resistance) provides immunity against bacteriophage. The pyrimidine cyclase (PycC) synthesizes cyclic nucleotides in response to infection; these serve as specific second messenger signals. The signals activate the adjacent effector, leading to bacterial cell death and abortive phage infection. A clade C Pycsar system. The pyrimidine cyclase gene of a two-gene Pycsar system, weakly generates cyclic UMP (cUMP) from UTP, has little to no activity on ATP, CTP or GTP. Expression of this and adjacent effector GmPycTM (AC P0DV43) probably confers resistance to bacteriophage. The genes are probably only expressed in response to bacteriophage infection. This chain is Uridylate cyclase, found in Gulbenkiania mobilis.